We begin with the raw amino-acid sequence, 414 residues long: MEVVLEGKFLLDKRTIEGYIGIEDGKISKISLREIKGDHKIKVDKGKVILPGLIDVHVHLRDFEESYKESIESGTKAAVHGGITVVFDMPNTKPPIMDEKTLKLREHLFKRKSYADYALGFLLAGNKPVEADFYKIFMGASTGGIYSKNFEEDYIRALDIVSIHAEDYEIIQKYPERPPIAEIRAIERVIEAVKTHKKPAHICHISTAKGLKLLLDSRLEMLSFEVTPHHLFLTRSDYDKNPLLKVYPPLRSEEDRIALWKNIDKVPVIASDHAPHTLEDKEAGAAGLPGLETEVPLLLDAVNKGLITLQDIVEKMHINPIKIFGIENKGFEKGKDADFTIVDMKREWTIRADNLYTKAGWTPYEGWRVKGKVIMTIIRGEVVMEEDEIIGKPRGERIVKKGKHRRNLGSSEEH.

Zn(2+) is bound by residues His57 and His59. Substrate contacts are provided by residues 59-61 and Asn91; that span reads HLR. Residues Lys135, His164, His204, and Asp272 each coordinate Zn(2+). At Lys135 the chain carries N6-carboxylysine. Asp272 is a catalytic residue. Residues His276 and 286–287 contribute to the substrate site; that span reads AG.

This sequence belongs to the metallo-dependent hydrolases superfamily. DHOase family. Class I DHOase subfamily. Zn(2+) is required as a cofactor.

It carries out the reaction (S)-dihydroorotate + H2O = N-carbamoyl-L-aspartate + H(+). It participates in pyrimidine metabolism; UMP biosynthesis via de novo pathway; (S)-dihydroorotate from bicarbonate: step 3/3. Its function is as follows. Catalyzes the reversible cyclization of carbamoyl aspartate to dihydroorotate. The protein is Dihydroorotase of Pyrococcus furiosus (strain ATCC 43587 / DSM 3638 / JCM 8422 / Vc1).